A 578-amino-acid chain; its full sequence is MEVKGEIYRVAGPVVTAIGLDAKMYDLCKVGNEGLMGEVIQIVGGKTIIQVYEETGGVKPGEPCVTTGMSLAVELGPGLLSSIYDGVQRPLHVLLEKTGGFIQRGVTADGLDHEKLWEFKPVAKKGDFVKGGEVLGVVQETVNLEHKVMMPPDKSGTVADIKSGNFTVLETVCTLTDGTELQMMHRWPVRRPRPVKRKLTPEKPLVTGQRILDGLFPVAKGGTAAIPGPFGSGKTVTQQQLSKWSDTEIVVYVGCGERGNEMADVLWDFPELEDPQTGRPLMERTILVANTSNMPVAAREASVYTGMTLAEYFRDMGYNVSLMADSTSRWAEAMREISSRLEEMPGEEGYPAYLSARLAEFYERAGVAETLCGEKGSITAIGAVSPPGGDFSEPVTQNTLRIVKVFWALDAKLSQRRHFPAINWLNSYSLYKEDLNDWFTENVAPDYVAMREKAMDMLQTESELQEIVQLVGSDALPEEQQLLLEITRMIREIYLQQNAFHPIDTYSPFAKQYKIMQAIMKYGDAAMDALKSGVPASEIIKMESKDELPKVKFEEDFDGSLSAVLAKMDKEFAALGGR.

228–235 (GPFGSGKT) provides a ligand contact to ATP.

Belongs to the ATPase alpha/beta chains family. As to quaternary structure, has multiple subunits with at least A(3), B(3), C, D, E, F, H, I and proteolipid K(x).

It is found in the cell membrane. It catalyses the reaction ATP + H2O + 4 H(+)(in) = ADP + phosphate + 5 H(+)(out). In terms of biological role, component of the A-type ATP synthase that produces ATP from ADP in the presence of a proton gradient across the membrane. The A chain is the catalytic subunit. This is A-type ATP synthase subunit A from Methanosarcina acetivorans (strain ATCC 35395 / DSM 2834 / JCM 12185 / C2A).